We begin with the raw amino-acid sequence, 501 residues long: Aldehyde dehydrogenase 1A1 (501 aa).

The residue at position 2 (Ser-2) is an N-acetylserine. 2 positions are modified to N6-acetyllysine: Lys-91 and Lys-128. Residues 167–170 (IPWN), 193–196 (KPAE), 226–227 (GP), and 246–247 (GS) contribute to the NAD(+) site. Lys-252 bears the N6-acetyllysine mark. The active-site Proton acceptor is Glu-269. 269-271 (ELG) serves as a coordination point for NAD(+). Cys-303 (nucleophile) is an active-site residue. Residues 336-501 (LNSGINQGPQ…VAIKISQKNS (166 aa)) form a mediates interaction with PRMT3 region. 349–353 (EQHDK) is a binding site for NAD(+). Residues Lys-353 and Lys-367 each carry the N6-acetyllysine modification. 400–402 (EIF) provides a ligand contact to NAD(+). The residue at position 410 (Lys-410) is an N6-acetyllysine. Ser-413 is subject to Phosphoserine. 3 positions are modified to N6-acetyllysine: Lys-419, Lys-435, and Lys-495.

It belongs to the aldehyde dehydrogenase family. Homotetramer. Interacts with PRMT3; the interaction is direct, inhibits ALDH1A1 aldehyde dehydrogenase activity and is independent of the methyltransferase activity of PRMT3. In terms of processing, the N-terminus is blocked most probably by acetylation.

Its subcellular location is the cytoplasm. It is found in the cytosol. The protein resides in the cell projection. It localises to the axon. It carries out the reaction an aldehyde + NAD(+) + H2O = a carboxylate + NADH + 2 H(+). It catalyses the reaction all-trans-retinal + NAD(+) + H2O = all-trans-retinoate + NADH + 2 H(+). The catalysed reaction is 9-cis-retinal + NAD(+) + H2O = 9-cis-retinoate + NADH + 2 H(+). The enzyme catalyses 11-cis-retinal + NAD(+) + H2O = 11-cis-retinoate + NADH + 2 H(+). It carries out the reaction 13-cis-retinal + NAD(+) + H2O = 13-cis-retinoate + NADH + 2 H(+). It catalyses the reaction 3-deoxyglucosone + NAD(+) + H2O = 2-dehydro-3-deoxy-D-gluconate + NADH + 2 H(+). The catalysed reaction is (E)-4-hydroxynon-2-enal + NAD(+) + H2O = (E)-4-hydroxynon-2-enoate + NADH + 2 H(+). The enzyme catalyses malonaldehyde + NAD(+) + H2O = 3-oxopropanoate + NADH + 2 H(+). It carries out the reaction hexanal + NAD(+) + H2O = hexanoate + NADH + 2 H(+). It catalyses the reaction propanal + NAD(+) + H2O = propanoate + NADH + 2 H(+). The catalysed reaction is acetaldehyde + NAD(+) + H2O = acetate + NADH + 2 H(+). The enzyme catalyses benzaldehyde + NAD(+) + H2O = benzoate + NADH + 2 H(+). It carries out the reaction 4-aminobutanal + NAD(+) + H2O = 4-aminobutanoate + NADH + 2 H(+). The protein operates within cofactor metabolism; retinol metabolism. Cytosolic dehydrogenase that catalyzes the irreversible oxidation of a wide range of aldehydes to their corresponding carboxylic acid. Functions downstream of retinol dehydrogenases and catalyzes the oxidation of retinaldehyde into retinoic acid, the second step in the oxidation of retinol/vitamin A into retinoic acid. This pathway is crucial to control the levels of retinol and retinoic acid, two important molecules which excess can be teratogenic and cytotoxic. Also oxidizes aldehydes resulting from lipid peroxidation like (E)-4-hydroxynon-2-enal/HNE, malonaldehyde and hexanal that form protein adducts and are highly cytotoxic. By participating for instance to the clearance of (E)-4-hydroxynon-2-enal/HNE in the lens epithelium prevents the formation of HNE-protein adducts and lens opacification. Also functions downstream of fructosamine-3-kinase in the fructosamine degradation pathway by catalyzing the oxidation of 3-deoxyglucosone, the carbohydrate product of fructosamine 3-phosphate decomposition, which is itself a potent glycating agent that may react with lysine and arginine side-chains of proteins. Also has an aminobutyraldehyde dehydrogenase activity and is probably part of an alternative pathway for the biosynthesis of GABA/4-aminobutanoate in midbrain, thereby playing a role in GABAergic synaptic transmission. The sequence is that of Aldehyde dehydrogenase 1A1 from Mesocricetus auratus (Golden hamster).